The sequence spans 530 residues: Ubiquitin carboxyl-terminal hydrolase 17-like protein 5 (530 aa).

A USP domain is found at 80–375 (AGLQNMGNTC…QAYVLFYIQK (296 aa)). Cys-89 functions as the Nucleophile in the catalytic mechanism. Catalysis depends on His-334, which acts as the Proton acceptor. 2 stretches are compositionally biased toward basic and acidic residues: residues 382-392 (SESVSRGREPR) and 398-412 (DTDRRATQGELKRDH). Disordered regions lie at residues 382-412 (SESVSRGREPRALGAEDTDRRATQGELKRDH) and 477-530 (NHHP…LVCQ). Over residues 493 to 505 (TPTHQESMNTGTL) the composition is skewed to polar residues. Residues 510-524 (GRARRSKGKNKHSKR) are compositionally biased toward basic residues.

The protein belongs to the peptidase C19 family. USP17 subfamily.

Its subcellular location is the nucleus. The protein localises to the endoplasmic reticulum. It catalyses the reaction Thiol-dependent hydrolysis of ester, thioester, amide, peptide and isopeptide bonds formed by the C-terminal Gly of ubiquitin (a 76-residue protein attached to proteins as an intracellular targeting signal).. Its function is as follows. Deubiquitinating enzyme that removes conjugated ubiquitin from specific proteins to regulate different cellular processes that may include cell proliferation, progression through the cell cycle, apoptosis, cell migration, and the cellular response to viral infection. This Homo sapiens (Human) protein is Ubiquitin carboxyl-terminal hydrolase 17-like protein 5 (USP17L5).